The chain runs to 345 residues: Meiotically up-regulated gene 97 protein (345 aa).

2 consecutive transmembrane segments (helical) span residues 292-312 (MWVL…GLWM) and 319-329 (FAHGMLLNLGI).

The protein resides in the membrane. Required for correct meiotic chromosome segregation. Appears to also have role in sporulation. This chain is Meiotically up-regulated gene 97 protein (mug97), found in Schizosaccharomyces pombe (strain 972 / ATCC 24843) (Fission yeast).